The primary structure comprises 400 residues: Enoyl-[acyl-carrier-protein] reductase [NADH] (400 aa).

NAD(+)-binding positions include 48–53, 74–75, 111–112, and 139–140; these read GSSSGY, FE, DA, and LA. Substrate is bound at residue tyrosine 225. Tyrosine 235 acts as the Proton donor in catalysis. Residues lysine 244 and 273-275 contribute to the NAD(+) site; that span reads VVT.

It belongs to the TER reductase family. Monomer.

It catalyses the reaction a 2,3-saturated acyl-[ACP] + NAD(+) = a (2E)-enoyl-[ACP] + NADH + H(+). The protein operates within lipid metabolism; fatty acid biosynthesis. In terms of biological role, involved in the final reduction of the elongation cycle of fatty acid synthesis (FAS II). Catalyzes the reduction of a carbon-carbon double bond in an enoyl moiety that is covalently linked to an acyl carrier protein (ACP). The polypeptide is Enoyl-[acyl-carrier-protein] reductase [NADH] (Shewanella oneidensis (strain ATCC 700550 / JCM 31522 / CIP 106686 / LMG 19005 / NCIMB 14063 / MR-1)).